A 471-amino-acid polypeptide reads, in one-letter code: Tripartite motif-containing protein 60 (471 aa).

The RING-type zinc finger occupies 16–57 (CPICLEYLKDPVTINCGHNFCRSCLSVSWKDLDDTFPCPVCR). Residues 92-133 (KENAMCEKHNQFLTLFCVKDLEILCTQCSFSTKHQKHYICPI) form a B box-type zinc finger. Zn(2+) contacts are provided by cysteine 97, histidine 100, cysteine 119, and histidine 125. The stretch at 171-223 (ELKKKVEYKREEINSEFEQIRLFLQNEQEMILRQIQDEEMNILAKLNENLVEL) forms a coiled coil. Positions 277 to 470 (FSLPPQYSGL…LKICSVSDSE (194 aa)) constitute a B30.2/SPRY domain.

This sequence belongs to the TRIM/RBCC family.

In terms of biological role, E3 SUMO-protein ligase that mediates SUMOylation of TAB2 leading to inhibition of NF-kappa-B and MAPK pathways by suppressing the TRAF6/TAB2/TAK1 complex. This is Tripartite motif-containing protein 60 (TRIM60) from Homo sapiens (Human).